Consider the following 604-residue polypeptide: Glutamine--fructose-6-phosphate aminotransferase [isomerizing] (604 aa).

Residue Cys-2 is the Nucleophile; for GATase activity of the active site. The 218-residue stretch at 2–219 folds into the Glutamine amidotransferase type-2 domain; that stretch reads CGIMGAVSER…EGDSACVTTQ (218 aa). SIS domains follow at residues 279-427 and 454-594; these read LRAS…DNRA and LASL…VDQP. Lys-599 serves as the catalytic For Fru-6P isomerization activity.

Homodimer.

The protein localises to the cytoplasm. The catalysed reaction is D-fructose 6-phosphate + L-glutamine = D-glucosamine 6-phosphate + L-glutamate. Its function is as follows. Catalyzes the first step in hexosamine metabolism, converting fructose-6P into glucosamine-6P using glutamine as a nitrogen source. This is Glutamine--fructose-6-phosphate aminotransferase [isomerizing] from Legionella pneumophila subsp. pneumophila (strain Philadelphia 1 / ATCC 33152 / DSM 7513).